The primary structure comprises 287 residues: Undecaprenyl-diphosphatase (287 aa).

Helical transmembrane passes span 6–26, 45–65, 89–109, 111–131, 204–224, 238–258, and 266–286; these read LHLL…FIPV, SGKV…MWIF, NLLL…KSIK, VFYH…IMLW, ATEF…VYDL, AIAV…RAVL, and YRVF…WIYA.

This sequence belongs to the UppP family.

The protein localises to the cell inner membrane. The enzyme catalyses di-trans,octa-cis-undecaprenyl diphosphate + H2O = di-trans,octa-cis-undecaprenyl phosphate + phosphate + H(+). Its function is as follows. Catalyzes the dephosphorylation of undecaprenyl diphosphate (UPP). Confers resistance to bacitracin. This chain is Undecaprenyl-diphosphatase, found in Bordetella pertussis (strain Tohama I / ATCC BAA-589 / NCTC 13251).